Here is a 236-residue protein sequence, read N- to C-terminus: Eukaryotic translation initiation factor 3 subunit J (236 aa).

Residues 20 to 88 (ANNINKWEGE…AEEEKRLANL (69 aa)) form a disordered region. Positions 28–46 (GEDDDEDVKESWEDEEEKK) are enriched in acidic residues. 2 stretches are compositionally biased toward basic and acidic residues: residues 47 to 58 (DEEKPTKTEVPV) and 68 to 88 (AKLE…LANL).

Belongs to the eIF-3 subunit J family. As to quaternary structure, component of the eukaryotic translation initiation factor 3 (eIF-3) complex. The eIF-3 complex interacts with pix.

It is found in the cytoplasm. Its function is as follows. Component of the eukaryotic translation initiation factor 3 (eIF-3) complex, which is involved in protein synthesis of a specialized repertoire of mRNAs and, together with other initiation factors, stimulates binding of mRNA and methionyl-tRNAi to the 40S ribosome. The eIF-3 complex specifically targets and initiates translation of a subset of mRNAs involved in cell proliferation. The sequence is that of Eukaryotic translation initiation factor 3 subunit J from Drosophila willistoni (Fruit fly).